A 398-amino-acid polypeptide reads, in one-letter code: Cap-specific mRNA (nucleoside-2'-O-)-methyltransferase 1 (398 aa).

A RrmJ-type SAM-dependent 2'-O-MTase domain is found at Q85–L298. 2 residues coordinate S-adenosyl-L-methionine: G132 and D211. K252 (proton acceptor) is an active-site residue. A disordered region spans residues L371–G398.

It catalyses the reaction a 5'-end (N(7)-methyl 5'-triphosphoguanosine)-ribonucleoside in mRNA + S-adenosyl-L-methionine = a 5'-end (N(7)-methyl 5'-triphosphoguanosine)-(2'-O-methyl-ribonucleoside) in mRNA + S-adenosyl-L-homocysteine + H(+). S-adenosyl-L-methionine-dependent methyltransferase that mediates RNA cap1 2'-O-ribose methylation to the 5'-cap structure of RNAs. Methylates the ribose of the first nucleotide of a m(7)GpppG-capped mRNA to produce m(7)GpppNmp (cap1). The protein is Cap-specific mRNA (nucleoside-2'-O-)-methyltransferase 1 of Leishmania braziliensis.